A 428-amino-acid chain; its full sequence is 3-phosphoshikimate 1-carboxyvinyltransferase (428 aa).

Lys21, Ser22, and Arg26 together coordinate 3-phosphoshikimate. Position 21 (Lys21) interacts with phosphoenolpyruvate. The phosphoenolpyruvate site is built by Gly92 and Arg120. 3-phosphoshikimate contacts are provided by Ser165, Gln167, Asp313, and Lys340. Gln167 serves as a coordination point for phosphoenolpyruvate. Asp313 serves as the catalytic Proton acceptor. The phosphoenolpyruvate site is built by Arg344 and Arg386.

It belongs to the EPSP synthase family. Monomer.

Its subcellular location is the cytoplasm. The enzyme catalyses 3-phosphoshikimate + phosphoenolpyruvate = 5-O-(1-carboxyvinyl)-3-phosphoshikimate + phosphate. It participates in metabolic intermediate biosynthesis; chorismate biosynthesis; chorismate from D-erythrose 4-phosphate and phosphoenolpyruvate: step 6/7. Functionally, catalyzes the transfer of the enolpyruvyl moiety of phosphoenolpyruvate (PEP) to the 5-hydroxyl of shikimate-3-phosphate (S3P) to produce enolpyruvyl shikimate-3-phosphate and inorganic phosphate. In Carboxydothermus hydrogenoformans (strain ATCC BAA-161 / DSM 6008 / Z-2901), this protein is 3-phosphoshikimate 1-carboxyvinyltransferase.